Consider the following 338-residue polypeptide: uncharacterized protein (338 aa).

The TNase-like domain occupies 144–321; sequence HTLPVDVKAV…RAARVGLWAS (178 aa). Catalysis depends on residues R228, E236, and R270.

This is an uncharacterized protein from Capnoides sempervirens (Rock-harlequin).